The following is a 414-amino-acid chain: MESHPHNKTDQTQHIILVHGPIIIGAGPSGLATSACLSSRGVPSLILERSDSIASLWKSKTYDRLRLHLPKHFCRLPLLDFPEYYPKYPSKNEFLAYLESYASHFRIAPRFNKNVQNAAYDSSSGFWRVKTHDNTEYLSKWLIVATGENADPYFPEIPGRKKFSGGKIVHASEYKSGEEFRRQKVLVVGCGNSGMEISLDLVRHNASPHLVVRNTVHVLPREILGVSTFGVGMTLLKCLPLRLVDKFLLLMANLSFGNTDRLGLRRPKTGPLELKNVTGKSPVLDVGAMSLIRSGMIQIMEGVKEITKKGAKFMDGQEKDFDSIIFATGYKSNVPTWLQGGDFFTDDGMPKTPFPNGWRGGKGLYTVGFTRRGLLGTASDAVKIAGEIGDQWRDEIKGSTRNMCSSRFVFTSKS.

Residue 25 to 30 coordinates FAD; the sequence is GAGPSG. Residue 189 to 194 participates in NADP(+) binding; sequence GCGNSG.

Belongs to the FMO family. The cofactor is FAD. As to expression, expressed in the apical meristems and young floral primordia. Detected in the floral meristems and at the base of the floral organs.

It carries out the reaction indole-3-pyruvate + NADPH + O2 + H(+) = (indol-3-yl)acetate + CO2 + NADP(+) + H2O. It participates in plant hormone metabolism; auxin biosynthesis. Functionally, involved in auxin biosynthesis, but not in the tryptamine or the CYP79B2/B3 branches. Catalyzes in vitro the N-oxidation of tryptamine to form N-hydroxyl tryptamine. Involved during embryogenesis and seedling development. Required for the formation of floral organs and vascular tissues. Belongs to the set of redundant YUCCA genes probably responsible for auxin biosynthesis in shoots. The protein is Probable indole-3-pyruvate monooxygenase YUCCA1 (YUC1) of Arabidopsis thaliana (Mouse-ear cress).